Consider the following 261-residue polypeptide: Guanine nucleotide exchange factor BopE (261 aa).

The span at 241–253 (RRAAQDASRDEKG) shows a compositional bias: basic and acidic residues. A disordered region spans residues 241–261 (RRAAQDASRDEKGAANAADGA).

It belongs to the GEF (guanine exchange factor) SopE family. In terms of assembly, monomer. Interacts with human CDC42.

It is found in the secreted. Activator for both CDC42 and RAC1 by directly interacting with these Rho GTPases and acting as a guanine nucleotide exchange factor (GEF). This activation results in actin cytoskeleton rearrangements and stimulates membrane ruffling, thus promoting bacterial entry into non-phagocytic cells. This Burkholderia thailandensis (strain ATCC 700388 / DSM 13276 / CCUG 48851 / CIP 106301 / E264) protein is Guanine nucleotide exchange factor BopE (bopE).